A 238-amino-acid chain; its full sequence is tRNA (guanine-N(7)-)-methyltransferase (238 aa).

Residues glutamate 68, glutamate 93, aspartate 120, and aspartate 143 each contribute to the S-adenosyl-L-methionine site. Aspartate 143 is an active-site residue. Substrate contacts are provided by residues lysine 147, aspartate 179, and 216-219 (TKFE).

Belongs to the class I-like SAM-binding methyltransferase superfamily. TrmB family.

The enzyme catalyses guanosine(46) in tRNA + S-adenosyl-L-methionine = N(7)-methylguanosine(46) in tRNA + S-adenosyl-L-homocysteine. It participates in tRNA modification; N(7)-methylguanine-tRNA biosynthesis. Catalyzes the formation of N(7)-methylguanine at position 46 (m7G46) in tRNA. This chain is tRNA (guanine-N(7)-)-methyltransferase, found in Shewanella woodyi (strain ATCC 51908 / MS32).